A 208-amino-acid chain; its full sequence is Large ribosomal subunit protein bL25 (208 aa).

It belongs to the bacterial ribosomal protein bL25 family. CTC subfamily. Part of the 50S ribosomal subunit; part of the 5S rRNA/L5/L18/L25 subcomplex. Contacts the 5S rRNA. Binds to the 5S rRNA independently of L5 and L18.

In terms of biological role, this is one of the proteins that binds to the 5S RNA in the ribosome where it forms part of the central protuberance. This Burkholderia thailandensis (strain ATCC 700388 / DSM 13276 / CCUG 48851 / CIP 106301 / E264) protein is Large ribosomal subunit protein bL25.